The following is a 564-amino-acid chain: Probable pectinesterase/pectinesterase inhibitor 46 (564 aa).

The helical transmembrane segment at Ile25 to Gly45 threads the bilayer. Residues Glu62–Ile207 form a pectinesterase inhibitor 46 region. Asn90, Asn126, Asn147, and Asn196 each carry an N-linked (GlcNAc...) asparagine glycan. The segment at Thr257 to Asn550 is pectinesterase 46. Substrate-binding residues include Thr332 and Gln362. The active-site Proton donor; for pectinesterase activity is the Asp385. Cys399 and Cys419 form a disulfide bridge. Residue Asp406 is the Nucleophile; for pectinesterase activity of the active site. 2 N-linked (GlcNAc...) asparagine glycosylation sites follow: Asn452 and Asn460. Residues Arg470 and Trp472 each contribute to the substrate site.

The protein in the N-terminal section; belongs to the PMEI family. This sequence in the C-terminal section; belongs to the pectinesterase family.

It is found in the membrane. It catalyses the reaction [(1-&gt;4)-alpha-D-galacturonosyl methyl ester](n) + n H2O = [(1-&gt;4)-alpha-D-galacturonosyl](n) + n methanol + n H(+). It participates in glycan metabolism; pectin degradation; 2-dehydro-3-deoxy-D-gluconate from pectin: step 1/5. In terms of biological role, acts in the modification of cell walls via demethylesterification of cell wall pectin. This is Probable pectinesterase/pectinesterase inhibitor 46 (PME46) from Arabidopsis thaliana (Mouse-ear cress).